The chain runs to 323 residues: tRNA U34 carboxymethyltransferase (323 aa).

Carboxy-S-adenosyl-L-methionine-binding positions include K91, W105, K110, G130, 181 to 182 (IE), M196, Y200, and R315.

This sequence belongs to the class I-like SAM-binding methyltransferase superfamily. CmoB family. In terms of assembly, homotetramer.

It catalyses the reaction carboxy-S-adenosyl-L-methionine + 5-hydroxyuridine(34) in tRNA = 5-carboxymethoxyuridine(34) in tRNA + S-adenosyl-L-homocysteine + H(+). Catalyzes carboxymethyl transfer from carboxy-S-adenosyl-L-methionine (Cx-SAM) to 5-hydroxyuridine (ho5U) to form 5-carboxymethoxyuridine (cmo5U) at position 34 in tRNAs. This chain is tRNA U34 carboxymethyltransferase, found in Serratia proteamaculans (strain 568).